The chain runs to 232 residues: Large ribosomal subunit protein uL1 (232 aa).

This sequence belongs to the universal ribosomal protein uL1 family. In terms of assembly, part of the 50S ribosomal subunit.

Its function is as follows. Binds directly to 23S rRNA. The L1 stalk is quite mobile in the ribosome, and is involved in E site tRNA release. Protein L1 is also a translational repressor protein, it controls the translation of the L11 operon by binding to its mRNA. This is Large ribosomal subunit protein uL1 from Christiangramia forsetii (strain DSM 17595 / CGMCC 1.15422 / KT0803) (Gramella forsetii).